The primary structure comprises 44 residues: Protein PsbN (44 aa).

Residues 7–29 (VATVFVSCLVLSITGYSLYIGFG) traverse the membrane as a helical segment.

The protein belongs to the PsbN family.

The protein localises to the plastid. Its subcellular location is the chloroplast thylakoid membrane. May play a role in photosystem I and II biogenesis. The sequence is that of Protein PsbN from Nephroselmis olivacea (Green alga).